Here is a 93-residue protein sequence, read N- to C-terminus: Alpha-defensin 21 (93 aa).

Positions 1–19 (MKTLVLLSALILLAYQVQT) are cleaved as a signal peptide. Residues 20–58 (DPIQNTDEETNTEEQPGEDDQAVSVSFGGQEGSALHEKL) constitute a propeptide that is removed on maturation. A disordered region spans residues 22–43 (IQNTDEETNTEEQPGEDDQAVS). Residues 25–40 (TDEETNTEEQPGEDDQ) are compositionally biased toward acidic residues. Disulfide bonds link cysteine 64-cysteine 89, cysteine 66-cysteine 81, and cysteine 71-cysteine 88.

It belongs to the alpha-defensin family.

It localises to the secreted. Its function is as follows. May have microbicidal activities. The sequence is that of Alpha-defensin 21 (Defa21) from Mus musculus (Mouse).